The primary structure comprises 366 residues: Galactoside alpha-(1,2)-fucosyltransferase 1 (366 aa).

The Cytoplasmic portion of the chain corresponds to 1 to 8; it reads MWPPSHRQ. The helical; Signal-anchor for type II membrane protein transmembrane segment at 9–25 threads the bilayer; sequence LCLAFLLVCVLSVISFF. Topologically, residues 26-366 are lumenal; it reads LHIHQDSFPH…LSSLWTLAKP (341 aa). Asn-66, Asn-302, and Asn-328 each carry an N-linked (GlcNAc...) asparagine glycan.

This sequence belongs to the glycosyltransferase 11 family.

It localises to the golgi apparatus. It is found in the golgi stack membrane. The enzyme catalyses a beta-D-galactosyl-(1-&gt;4)-N-acetyl-beta-D-glucosaminyl derivative + GDP-beta-L-fucose = an alpha-L-Fuc-(1-&gt;2)-beta-D-Gal-(1-&gt;4)-beta-D-GlcNAc derivative + GDP + H(+). The catalysed reaction is a ganglioside GA1 + GDP-beta-L-fucose = a ganglioside Fuc-GA1 + GDP + H(+). It carries out the reaction a beta-D-Gal-(1-&gt;3)-beta-D-GlcNAc-(1-&gt;3)-beta-D-Gal-(1-&gt;4)-beta-D-Glc-(1&lt;-&gt;1')-Cer(d18:1(4E)) + GDP-beta-L-fucose = alpha-L-fucosyl-(1-&gt;2)- beta-D-galactosyl-(1-&gt;3)-N-acetyl-beta-D-glucosaminyl-(1-&gt;3)-beta-D-galactosyl-(1-&gt;4)-beta-D-glucosyl-(1&lt;-&gt;1')-N-acylsphing-4-enine + GDP + H(+). It catalyses the reaction a neolactoside nLc4Cer(d18:1(4E)) + GDP-beta-L-fucose = a neolactoside IV(2)-alpha-Fuc-nLc4Cer(d18:1(4E)) + GDP + H(+). The enzyme catalyses a ganglioside GM1 + GDP-beta-L-fucose = a ganglioside Fuc-GM1 + GDP + H(+). The catalysed reaction is beta-D-galactosyl-(1-&gt;3)-N-acetyl-D-galactosamine + GDP-beta-L-fucose = alpha-L-fucosyl-(1-&gt;2)-beta-D-galactosyl-(1-&gt;3)-N-acetyl-D-galactosamine + GDP + H(+). It functions in the pathway protein modification; protein glycosylation. In terms of biological role, catalyzes the transfer of L-fucose, from a guanosine diphosphate-beta-L-fucose, to the terminal galactose residue of glycoconjugates through an alpha(1,2) linkage leading to H antigen synthesis that is an intermediate substrate in the synthesis of ABO blood group antigens. H antigen is essential for maturation of the glomerular layer of the main olfactory bulb, in cell migration and early cell-cell contacts during tumor associated angiogenesis. Preferentially fucosylates soluble lactose and to a lesser extent fucosylates glycolipids gangliosides GA1 and GM1a. The protein is Galactoside alpha-(1,2)-fucosyltransferase 1 of Pan troglodytes (Chimpanzee).